Consider the following 114-residue polypeptide: Large ribosomal subunit protein bL20 (114 aa).

The protein belongs to the bacterial ribosomal protein bL20 family.

Binds directly to 23S ribosomal RNA and is necessary for the in vitro assembly process of the 50S ribosomal subunit. It is not involved in the protein synthesizing functions of that subunit. The polypeptide is Large ribosomal subunit protein bL20 (Amoebophilus asiaticus (strain 5a2)).